Reading from the N-terminus, the 215-residue chain is Thymidylate kinase (215 aa).

10 to 17 (GGEGVGKT) serves as a coordination point for ATP.

Belongs to the thymidylate kinase family.

The enzyme catalyses dTMP + ATP = dTDP + ADP. Its function is as follows. Phosphorylation of dTMP to form dTDP in both de novo and salvage pathways of dTTP synthesis. This Bartonella henselae (strain ATCC 49882 / DSM 28221 / CCUG 30454 / Houston 1) (Rochalimaea henselae) protein is Thymidylate kinase.